The primary structure comprises 243 residues: TIGR03089 family protein (243 aa).

This sequence belongs to the TIGR03089 family.

The sequence is that of TIGR03089 family protein from Mycobacterium tuberculosis (strain ATCC 25618 / H37Rv).